A 451-amino-acid chain; its full sequence is tRNA modification GTPase MnmE (451 aa).

The (6S)-5-formyl-5,6,7,8-tetrahydrofolate site is built by R25, E87, and R127. Residues 222–374 form the TrmE-type G domain; that stretch reads GLRVALVGRP…FVQVLLERCG (153 aa). K(+) is bound at residue N232. GTP-binding positions include 232 to 237, 251 to 257, and 276 to 279; these read NVGKSS, TELPGTT, and DTAG. S236 is a Mg(2+) binding site. Positions 251, 253, and 256 each coordinate K(+). T257 contacts Mg(2+). K451 provides a ligand contact to (6S)-5-formyl-5,6,7,8-tetrahydrofolate.

Belongs to the TRAFAC class TrmE-Era-EngA-EngB-Septin-like GTPase superfamily. TrmE GTPase family. Homodimer. Heterotetramer of two MnmE and two MnmG subunits. The cofactor is K(+).

It localises to the cytoplasm. Functionally, exhibits a very high intrinsic GTPase hydrolysis rate. Involved in the addition of a carboxymethylaminomethyl (cmnm) group at the wobble position (U34) of certain tRNAs, forming tRNA-cmnm(5)s(2)U34. In Synechococcus sp. (strain CC9902), this protein is tRNA modification GTPase MnmE.